The chain runs to 871 residues: DNA mismatch repair protein MutS (871 aa).

625-632 contributes to the ATP binding site; sequence GPNMAGKS.

It belongs to the DNA mismatch repair MutS family.

Functionally, this protein is involved in the repair of mismatches in DNA. It is possible that it carries out the mismatch recognition step. This protein has a weak ATPase activity. In Chlorobium limicola (strain DSM 245 / NBRC 103803 / 6330), this protein is DNA mismatch repair protein MutS.